A 299-amino-acid chain; its full sequence is Biotin transporter (299 aa).

10 consecutive transmembrane segments (helical) span residues 2 to 22 (ALLI…GEYL), 26 to 46 (VDSY…FLPF), 56 to 76 (TISL…MLSF), 81 to 101 (YLTV…ITLI), 110 to 130 (LRWG…IIRY), 137 to 157 (FWVG…GMVG), 172 to 192 (AFAW…SLLG), 202 to 222 (LQWS…YFMW), 233 to 253 (TLGI…LAIW), and 256 to 276 (QPHW…LWVH). EamA domains are found at residues 3-128 (LLII…AGII) and 139-274 (VGLL…ASLW).

It belongs to the drug/metabolite transporter (DMT) superfamily. 10 TMS drug/metabolite exporter (DME) (TC 2.A.7.3) family.

It is found in the cell inner membrane. It catalyses the reaction biotin(in) = biotin(out). Uptake of biotin. In Salmonella typhi, this protein is Biotin transporter.